The chain runs to 296 residues: 5'-3' exonuclease (296 aa).

In terms of domain architecture, 5'-3' exonuclease spans valine 175 to alanine 262.

Its function is as follows. 5'-3' exonuclease acting preferentially on double-stranded DNA. This chain is 5'-3' exonuclease (ypcP), found in Bacillus subtilis (strain 168).